The sequence spans 91 residues: Small membrane A-kinase anchor protein (91 aa).

Gly2 carries the N-myristoyl glycine lipid modification.

The protein belongs to the small membrane AKAP family. In terms of processing, may be palmitoylated at Cys-3.

It localises to the cell membrane. Its function is as follows. Binds to type I regulatory subunits of protein kinase A and may anchor/target them to the plasma membrane. The polypeptide is Small membrane A-kinase anchor protein (Xenopus laevis (African clawed frog)).